The chain runs to 55 residues: UPF0391 membrane protein RALTA_A0099 (55 aa).

The next 2 helical transmembrane spans lie at 5–25 (ALVF…GIAA) and 30–50 (IAKI…VMGL).

Belongs to the UPF0391 family.

Its subcellular location is the cell membrane. In Cupriavidus taiwanensis (strain DSM 17343 / BCRC 17206 / CCUG 44338 / CIP 107171 / LMG 19424 / R1) (Ralstonia taiwanensis (strain LMG 19424)), this protein is UPF0391 membrane protein RALTA_A0099.